The primary structure comprises 251 residues: Long-distance movement protein (251 aa).

Residues 25–134 form a disordered region; sequence SGKSCNSGGA…VAQPQQRWAK (110 aa). Residues 108–122 carry the Nuclear localization signal motif; that stretch reads RPRRRAGRSGGMDPR. Residues 149–153 carry the Nuclear export signal motif; sequence LPSLL.

As to quaternary structure, homooligomer. Interacts with host FIB2; this interaction, is required for ORF3 protein transiting through host Cajal body and nucleolus, relocalization of fibrillarin to the cytoplasm, and in presence of viral RNA, leads to the formation of stable RNPs.

The protein resides in the host cytoplasm. It localises to the host nucleus. It is found in the host nucleolus. Functionally, protects and provides long-distance movement to viral RNA. Self associates and binds viral RNA and fibrillarin to form filamentous ribonucleoproteins (RNPs) protected from RNase. ORF3 protein actually fulfills functions that are usually provided by capsid protein, which is absent from umbraviruses' genome. The protein is Long-distance movement protein (ORF3) of Clitoria (Hyacinth bean).